We begin with the raw amino-acid sequence, 297 residues long: Lipoprotein NlpD/LppB homolog (297 aa).

The first 22 residues, 1 to 22 (MDKGEGLRLAATLRQWTRLYGG), serve as a signal peptide directing secretion. Cys23 is lipidated: N-palmitoyl cysteine. Cys23 carries the S-diacylglycerol cysteine lipid modification. The 45-residue stretch at 67–111 (GQYIVRRGDTLYSIAFRFGWDWKALAARNGIAPPYTIQVGQAIQF) folds into the LysM domain. The tract at residues 134-168 (TKPTPVPPAVSTSVPAKPAPAPASTTTPPSSGATP) is disordered.

Belongs to the E.coli NlpD/Haemophilus LppB family.

The protein localises to the cell inner membrane. In Pseudomonas aeruginosa (strain ATCC 15692 / DSM 22644 / CIP 104116 / JCM 14847 / LMG 12228 / 1C / PRS 101 / PAO1), this protein is Lipoprotein NlpD/LppB homolog.